The sequence spans 301 residues: Protease HtpX (301 aa).

The next 2 helical transmembrane spans lie at 4–24 (IGLF…ILSL) and 38–58 (LGNL…VSLF). Residue histidine 147 participates in Zn(2+) binding. The active site involves glutamate 148. Histidine 151 contributes to the Zn(2+) binding site. The next 2 helical transmembrane spans lie at 155–175 (GDMV…MFFA) and 200–220 (FIIT…IVMW). Position 226 (glutamate 226) interacts with Zn(2+).

This sequence belongs to the peptidase M48B family. Requires Zn(2+) as cofactor.

The protein localises to the cell inner membrane. This Acinetobacter baumannii (strain AB307-0294) protein is Protease HtpX.